We begin with the raw amino-acid sequence, 207 residues long: Small ribosomal subunit protein uS4c (207 aa).

The S4 RNA-binding domain occupies 92 to 153; sequence MRLDNILFRL…PKTYQSILSK (62 aa).

It belongs to the universal ribosomal protein uS4 family. Part of the 30S ribosomal subunit. Contacts protein S5. The interaction surface between S4 and S5 is involved in control of translational fidelity.

The protein resides in the plastid. The protein localises to the chloroplast. In terms of biological role, one of the primary rRNA binding proteins, it binds directly to 16S rRNA where it nucleates assembly of the body of the 30S subunit. With S5 and S12 plays an important role in translational accuracy. This chain is Small ribosomal subunit protein uS4c (rps4), found in Equisetum laevigatum (Smooth horsetail).